Consider the following 129-residue polypeptide: uncharacterized protein (129 aa).

2 C2H2-type zinc fingers span residues 75-99 and 101-124; these read FVCPLCLMPFSSSVSLKQHIRYTEH and KVCPVCKKEFTSTDSALDHVCKKH.

Functionally, essential for virus function. This is an uncharacterized protein from Saccharolobus solfataricus (Sulfolobus solfataricus).